The chain runs to 207 residues: MASVSPLAKYKLVFLGDQSVGKTSIITRFMYDKFDTTYQATIGIDFLSKTMYLEDRTVRLQLWDTAGQERFRSLIPSYIRDSSVAVIVYDVANRQSFLNTSKWIEDVRTERGSDVIIVLVGNKTDLVDKRQVSIEEGDNKARDYGVIFIETSAKAGFNIKPLFRKIAAALPGMETLSSTKQEDMVDVNLKTSSNSAQGEQQRGGCAC.

16–23 is a GTP binding site; the sequence is GDQSVGKT. An Effector region motif is present at residues 38 to 46; sequence YQATIGIDF. Residues 64–68, 122–125, and 152–153 each bind GTP; these read DTAGQ, NKTD, and SA. Residues Cys205 and Cys207 are each lipidated (S-geranylgeranyl cysteine). Cysteine methyl ester is present on Cys207.

The protein belongs to the small GTPase superfamily. Rab family.

The protein localises to the golgi apparatus membrane. Its function is as follows. Protein transport. Regulator of membrane traffic from the Golgi apparatus towards the endoplasmic reticulum (ER). This chain is Ras-related protein RABH1e (RABH1E), found in Arabidopsis thaliana (Mouse-ear cress).